The sequence spans 125 residues: Short coiled-coil protein (125 aa).

The segment at 1–31 (MSKMDGLSTGEEEDSTFTSISLEDDTDHSLK) is disordered. Residues 43–101 (KMMNADMDAVDAENQVELEEKTRLINQVLELQHTLEDLSARVDAVKEENLKLKSENQVL) adopt a coiled-coil conformation.

It belongs to the SCOC family. As to quaternary structure, homodimer. Interacts with ARL1, ARL2 and ARL3. Directly interacts with FEZ1 and UVRAG. The interaction with UVRAG is reduced by amino acid starvation, but the complex is stabilized in the presence of FEZ1. Interacts with NRBF2.

The protein resides in the golgi apparatus membrane. The protein localises to the golgi apparatus. It localises to the trans-Golgi network. It is found in the cytoplasm. Its subcellular location is the cytosol. Positive regulator of amino acid starvation-induced autophagy. The protein is Short coiled-coil protein (Scoc) of Mus musculus (Mouse).